The sequence spans 640 residues: Threonine--tRNA ligase (640 aa).

Residues 1–61 form the TGS domain; that stretch reads MPIITLPNGD…TEDATLQIIT (61 aa). A catalytic region spans residues 242-533; that stretch reads DHRKIGKALD…LIEHYAGFMP (292 aa). C333, H384, and H510 together coordinate Zn(2+).

It belongs to the class-II aminoacyl-tRNA synthetase family. Homodimer. Zn(2+) serves as cofactor.

The protein localises to the cytoplasm. The catalysed reaction is tRNA(Thr) + L-threonine + ATP = L-threonyl-tRNA(Thr) + AMP + diphosphate + H(+). Its function is as follows. Catalyzes the attachment of threonine to tRNA(Thr) in a two-step reaction: L-threonine is first activated by ATP to form Thr-AMP and then transferred to the acceptor end of tRNA(Thr). Also edits incorrectly charged L-seryl-tRNA(Thr). This Acinetobacter baylyi (strain ATCC 33305 / BD413 / ADP1) protein is Threonine--tRNA ligase.